The following is a 492-amino-acid chain: Proline--tRNA ligase (492 aa).

The protein belongs to the class-II aminoacyl-tRNA synthetase family. ProS type 3 subfamily. Homodimer.

It is found in the cytoplasm. The enzyme catalyses tRNA(Pro) + L-proline + ATP = L-prolyl-tRNA(Pro) + AMP + diphosphate. Its function is as follows. Catalyzes the attachment of proline to tRNA(Pro) in a two-step reaction: proline is first activated by ATP to form Pro-AMP and then transferred to the acceptor end of tRNA(Pro). This chain is Proline--tRNA ligase, found in Flavobacterium johnsoniae (strain ATCC 17061 / DSM 2064 / JCM 8514 / BCRC 14874 / CCUG 350202 / NBRC 14942 / NCIMB 11054 / UW101) (Cytophaga johnsonae).